We begin with the raw amino-acid sequence, 309 residues long: UDP-3-O-acyl-N-acetylglucosamine deacetylase (309 aa).

His78, His235, and Asp239 together coordinate Zn(2+). His262 (proton donor) is an active-site residue.

It belongs to the LpxC family. It depends on Zn(2+) as a cofactor.

The enzyme catalyses a UDP-3-O-[(3R)-3-hydroxyacyl]-N-acetyl-alpha-D-glucosamine + H2O = a UDP-3-O-[(3R)-3-hydroxyacyl]-alpha-D-glucosamine + acetate. It functions in the pathway glycolipid biosynthesis; lipid IV(A) biosynthesis; lipid IV(A) from (3R)-3-hydroxytetradecanoyl-[acyl-carrier-protein] and UDP-N-acetyl-alpha-D-glucosamine: step 2/6. Functionally, catalyzes the hydrolysis of UDP-3-O-myristoyl-N-acetylglucosamine to form UDP-3-O-myristoylglucosamine and acetate, the committed step in lipid A biosynthesis. The sequence is that of UDP-3-O-acyl-N-acetylglucosamine deacetylase from Syntrophotalea carbinolica (strain DSM 2380 / NBRC 103641 / GraBd1) (Pelobacter carbinolicus).